A 324-amino-acid chain; its full sequence is Serine carboxypeptidase II-1 (324 aa).

N10 is a glycosylation site (N-linked (GlcNAc...) asparagine). The active site involves S41. Intrachain disulfides connect C109-C121 and C145-C170. Residues 150–162 (LHRRRLIKGRRPW) constitute a propeptide, linker peptide. N-linked (GlcNAc...) asparagine glycosylation occurs at N191. Residues D239 and H291 contribute to the active site.

It belongs to the peptidase S10 family. Carboxypeptidase II is a dimer, where each monomer is composed of two chains linked by a disulfide bond. Post-translationally, the linker peptide is endoproteolytically excised during enzyme maturation.

It carries out the reaction Preferential release of a C-terminal arginine or lysine residue.. This Hordeum vulgare (Barley) protein is Serine carboxypeptidase II-1 (CXP;2-1).